A 255-amino-acid chain; its full sequence is Ribonuclease HII (255 aa).

The region spanning 72-255 (QYIAGIDEAG…RSFAPVKAHE (184 aa)) is the RNase H type-2 domain. Positions 78, 79, and 170 each coordinate a divalent metal cation.

It belongs to the RNase HII family. Mn(2+) serves as cofactor. Requires Mg(2+) as cofactor.

It localises to the cytoplasm. The enzyme catalyses Endonucleolytic cleavage to 5'-phosphomonoester.. Its function is as follows. Endonuclease that specifically degrades the RNA of RNA-DNA hybrids. This Bacillus licheniformis (strain ATCC 14580 / DSM 13 / JCM 2505 / CCUG 7422 / NBRC 12200 / NCIMB 9375 / NCTC 10341 / NRRL NRS-1264 / Gibson 46) protein is Ribonuclease HII.